The primary structure comprises 436 residues: Enolase 1 (436 aa).

Ser40 is a Mg(2+) binding site. A disulfide bridge links Cys147 with Cys169. (2R)-2-phosphoglycerate contacts are provided by Gln164 and Glu208. Glu208 (proton donor) is an active-site residue. The Mg(2+) site is built by Asp243, Glu296, and Asp322. Asp322 serves as a coordination point for (2R)-2-phosphoglycerate. The active-site Proton acceptor is Lys347. (2R)-2-phosphoglycerate contacts are provided by Arg376 and Ser377.

Belongs to the enolase family. In terms of assembly, homodimer. Homotetramer. Interacts with methyltransferase METH; the interaction inhibits METH catalytic activity; 2-phosphoglycerate binding to ENO prevents the interaction with METH. The cofactor is Mg(2+).

Its subcellular location is the cytoplasm. The protein resides in the nucleus. It carries out the reaction (2R)-2-phosphoglycerate = phosphoenolpyruvate + H2O. The protein operates within carbohydrate degradation; glycolysis; pyruvate from D-glyceraldehyde 3-phosphate: step 4/5. In terms of biological role, glycolytic enzyme that catalyzes the conversion of 2-phosphoglycerate to phosphoenolpyruvate. Inhibits tRNA methyltransferase METH catalytic activity in the absence of 2-phosphoglycerate. In Entamoeba histolytica (strain ATCC 30459 / HM-1:IMSS / ABRM), this protein is Enolase 1.